The sequence spans 347 residues: Spermidine/putrescine import ATP-binding protein PotA (347 aa).

In terms of domain architecture, ABC transporter spans 6–236 (IELRDISKHY…PKNSFVAKFI (231 aa)). Residue 38–45 (GPSGCGKT) participates in ATP binding.

The protein belongs to the ABC transporter superfamily. Spermidine/putrescine importer (TC 3.A.1.11.1) family. In terms of assembly, the complex is composed of two ATP-binding proteins (PotA), two transmembrane proteins (PotB and PotC) and a solute-binding protein (PotD).

The protein localises to the cell membrane. It catalyses the reaction ATP + H2O + polyamine-[polyamine-binding protein]Side 1 = ADP + phosphate + polyamineSide 2 + [polyamine-binding protein]Side 1.. In terms of biological role, part of the ABC transporter complex PotABCD involved in spermidine/putrescine import. Responsible for energy coupling to the transport system. The sequence is that of Spermidine/putrescine import ATP-binding protein PotA from Clostridioides difficile (strain 630) (Peptoclostridium difficile).